We begin with the raw amino-acid sequence, 261 residues long: Precorrin-6A synthase [deacetylating] (261 aa).

It carries out the reaction precorrin-5 + S-adenosyl-L-methionine + H2O = precorrin-6A + acetate + S-adenosyl-L-homocysteine + 2 H(+). It participates in cofactor biosynthesis; adenosylcobalamin biosynthesis; cob(II)yrinate a,c-diamide from precorrin-2 (aerobic route): step 5/10. Catalyzes the methylation of C-1 in precorrin-5 and the subsequent extrusion of acetic acid from the resulting intermediate to form cobalt-precorrin-6A. This chain is Precorrin-6A synthase [deacetylating] (cobF), found in Sinorhizobium sp.